Here is a 79-residue protein sequence, read N- to C-terminus: Large ribosomal subunit protein bL31c (79 aa).

This sequence belongs to the bacterial ribosomal protein bL31 family. Type A subfamily. Part of the 50S ribosomal subunit.

It localises to the plastid. The protein resides in the chloroplast. Its function is as follows. Binds the 23S rRNA. This is Large ribosomal subunit protein bL31c from Gracilaria tenuistipitata var. liui (Red alga).